A 690-amino-acid chain; its full sequence is Copper-exporting P-type ATPase B (690 aa).

Residues methionine 1 to valine 64 are Cytoplasmic-facing. A disordered region spans residues glutamine 23–aspartate 46. Positions histidine 28–aspartate 46 are enriched in basic and acidic residues. The chain crosses the membrane as a helical span at residues serine 65–phenylalanine 85. Residues arginine 86–glycine 91 lie on the Extracellular side of the membrane. A helical transmembrane segment spans residues serine 92 to leucine 112. The Cytoplasmic segment spans residues lysine 113–methionine 127. A helical membrane pass occupies residues threonine 128–leucine 148. At lysine 149–lysine 151 the chain is on the extracellular side. Residues phenylalanine 152–methionine 172 form a helical membrane-spanning segment. Residues arginine 173 to arginine 303 are Cytoplasmic-facing. A helical membrane pass occupies residues alanine 304–leucine 324. The Extracellular segment spans residues alanine 325–arginine 336. The chain crosses the membrane as a helical span at residues alanine 337–valine 357. Residues alanine 358–asparagine 640 lie on the Cytoplasmic side of the membrane. Aspartate 389 functions as the 4-aspartylphosphate intermediate in the catalytic mechanism. Residues lysine 390 to threonine 391, threonine 537 to glycine 538, and lysine 565 contribute to the phosphate site. Mg(2+) contacts are provided by aspartate 583 and aspartate 587. A helical transmembrane segment spans residues leucine 641–serine 661. The Extracellular segment spans residues alanine 662–glycine 663. A helical membrane pass occupies residues isoleucine 664–isoleucine 684. The Cytoplasmic segment spans residues asparagine 685–arginine 690.

The protein belongs to the cation transport ATPase (P-type) (TC 3.A.3) family. Type IB subfamily.

Its subcellular location is the cell membrane. The enzyme catalyses Cu(2+)(in) + ATP + H2O = Cu(2+)(out) + ADP + phosphate + H(+). Activated by Cu(2+) and to a lesser extent by Ag(+) and Cu(+). Involved in copper export. In Archaeoglobus fulgidus (strain ATCC 49558 / DSM 4304 / JCM 9628 / NBRC 100126 / VC-16), this protein is Copper-exporting P-type ATPase B (copB).